Consider the following 207-residue polypeptide: LPS-assembly lipoprotein LptE (207 aa).

The N-terminal stretch at 1-19 is a signal peptide; sequence MRHRILTLLLGLAVLVTAG. Residue Cys-20 is the site of N-palmitoyl cysteine attachment. Cys-20 carries S-diacylglycerol cysteine lipidation. The segment at 168–207 is disordered; that stretch reads KNTQKNGDKPVSDANAAQGSTPTAVNETTLGEPAVSTSAK. Over residues 182–207 the composition is skewed to polar residues; the sequence is NAAQGSTPTAVNETTLGEPAVSTSAK.

It belongs to the LptE lipoprotein family. As to quaternary structure, component of the lipopolysaccharide transport and assembly complex. Interacts with LptD.

The protein localises to the cell outer membrane. In terms of biological role, together with LptD, is involved in the assembly of lipopolysaccharide (LPS) at the surface of the outer membrane. Required for the proper assembly of LptD. Binds LPS and may serve as the LPS recognition site at the outer membrane. This is LPS-assembly lipoprotein LptE from Yersinia pseudotuberculosis serotype O:1b (strain IP 31758).